Consider the following 82-residue polypeptide: Cytochrome b559 subunit alpha (82 aa).

A helical membrane pass occupies residues 22–36 (IIHAVTLPAIFIAGF). H24 lines the heme pocket.

The protein belongs to the PsbE/PsbF family. As to quaternary structure, heterodimer of an alpha subunit and a beta subunit. PSII is composed of 1 copy each of membrane proteins PsbA, PsbB, PsbC, PsbD, PsbE, PsbF, PsbH, PsbI, PsbJ, PsbK, PsbL, PsbM, PsbT, PsbX, PsbY, Psb30/Ycf12, peripheral proteins PsbO, CyanoQ (PsbQ), PsbU, PsbV and a large number of cofactors. It forms dimeric complexes. Requires heme b as cofactor.

The protein localises to the cellular thylakoid membrane. In terms of biological role, this b-type cytochrome is tightly associated with the reaction center of photosystem II (PSII). PSII is a light-driven water:plastoquinone oxidoreductase that uses light energy to abstract electrons from H(2)O, generating O(2) and a proton gradient subsequently used for ATP formation. It consists of a core antenna complex that captures photons, and an electron transfer chain that converts photonic excitation into a charge separation. The sequence is that of Cytochrome b559 subunit alpha from Prochlorococcus marinus (strain SARG / CCMP1375 / SS120).